The following is a 189-amino-acid chain: MIKTTPHKIVILMGILLSPSVFATDINVEFTATVKATTCNITLTGNNVTNDGNNNYTLRIPKMGLDKIANKTTESQADFKLVASGCSSGISWIDTTLTGNASSSSPKLIIPQSGDSSSTTSNIGMGFKKRTTDDATFLKPNSAEKIRWSTDEMQPDKGLEMTVALRETDAGQGVPGNFRALATFNFIYQ.

Positions methionine 1 to alanine 23 are cleaved as a signal peptide. The segment at serine 104 to methionine 125 is disordered. The segment covering serine 113–isoleucine 123 has biased composition (polar residues).

It belongs to the fimbrial protein family.

The protein localises to the fimbrium. Its function is as follows. Part of the yadCKLM-htrE-yadVN fimbrial operon. Could contribute to adhesion to various surfaces in specific environmental niches. This is an uncharacterized protein from Escherichia coli (strain K12).